A 244-amino-acid chain; its full sequence is ATP synthase subunit a (244 aa).

7 helical membrane-spanning segments follow: residues 17 to 37, 74 to 94, 112 to 132, 148 to 168, 171 to 191, 196 to 216, and 217 to 237; these read LSNV…AVLT, PFLA…MLGL, DPAI…YYGV, IPLL…TLGL, YGNI…ATNF, IALG…WQAF, and SLFV…VYIS.

The protein belongs to the ATPase A chain family. F-type ATPases have 2 components, CF(1) - the catalytic core - and CF(0) - the membrane proton channel. CF(1) has five subunits: alpha(3), beta(3), gamma(1), delta(1), epsilon(1). CF(0) has three main subunits: a(1), b(2) and c(9-12). The alpha and beta chains form an alternating ring which encloses part of the gamma chain. CF(1) is attached to CF(0) by a central stalk formed by the gamma and epsilon chains, while a peripheral stalk is formed by the delta and b chains.

The protein resides in the cell membrane. Functionally, key component of the proton channel; it plays a direct role in the translocation of protons across the membrane. This is ATP synthase subunit a from Bacillus pumilus (strain SAFR-032).